The chain runs to 971 residues: Translation initiation factor IF-2 (971 aa).

Residues 48–63 (DHLRKSHGATDGDKRK) are compositionally biased toward basic and acidic residues. 2 disordered regions span residues 48 to 86 (DHLRKSHGATDGDKRKITLTRKHTSEIKQSDATGKARTI) and 100 to 381 (DDVA…STFQ). The span at 105 to 114 (GADQGQAQVA) shows a compositional bias: low complexity. Residues 121–181 (ELKRREEEAR…EEEAATKRAA (61 aa)) are compositionally biased toward basic and acidic residues. Positions 182 to 202 (AEVAAAQQQAAAQQAAAEQEA) are enriched in low complexity. The segment covering 210 to 261 (DEARAAAERAAQREAAKKAEDAAREAADKARAEQEEISKRRAAAEAEARAIR) has biased composition (basic and acidic residues). A compositionally biased stretch (pro residues) spans 277-286 (PPKPVEPPKP). The span at 304 to 326 (ARPAVKKPAGAAAPATTQAPAGA) shows a compositional bias: low complexity. Gly residues predominate over residues 356–369 (SSGGVDRGWRGGPK). A tr-type G domain is found at 471 to 640 (PRPPVVTVMG…LLQAEVLELK (170 aa)). Residues 480 to 487 (GHVDHGKT) are G1. A GTP-binding site is contributed by 480-487 (GHVDHGKT). Positions 505–509 (GITQH) are G2. The G3 stretch occupies residues 526 to 529 (DTPG). GTP is bound by residues 526–530 (DTPGH) and 580–583 (NKID). Residues 580-583 (NKID) form a G4 region. The segment at 616–618 (SAK) is G5.

This sequence belongs to the TRAFAC class translation factor GTPase superfamily. Classic translation factor GTPase family. IF-2 subfamily.

The protein resides in the cytoplasm. Its function is as follows. One of the essential components for the initiation of protein synthesis. Protects formylmethionyl-tRNA from spontaneous hydrolysis and promotes its binding to the 30S ribosomal subunits. Also involved in the hydrolysis of GTP during the formation of the 70S ribosomal complex. The protein is Translation initiation factor IF-2 of Burkholderia orbicola (strain AU 1054).